The sequence spans 1299 residues: MGNKRFRSDNNAGKPTSVEATRIWATKVIEDFRASGNEVYTFEHNLSNNERGVIHQMCRKMGIQSKSSGRGEQRRLSIFKSRHKNGNKNEANEKSNKEKLKCVSFPPGADVILQELFTHYPPCDGDTAATSFTKYSGNKGKQGQWKDDFFRKPQISSEEILEKVASLSSRLKKDKALKEITKLRSKLPITSFKDAITSAVESNQVILISGETGCGKTTQVPQYLLDHMWSSKRETCKIVCTQPRRISAMSVSERISCERGESIGENIGYKVRLQSKGGRHSSVVFCTNGILLRVLVGKGSVSSVSDITHIIVDEIHERDCYSDFMLAIIRDLLPSNPHLRLILMSATLDAERFSGYFGGCPVVRVPGFTYPVRTLYLEDVLSILKSGGDNHLSSTNLSISDHKLDLTDEDKLALDEAIILAWTNDEFDALLDLVSSRGSHEIYNYQHQSTWLTPLMVFAGKGRISDVCMLLSFGADWSLKSKDGMTALELAEAENQLEAAQIIREHADNSQSNSQQGQQLLDKYMATINPEQVDVSLIQQLMRKICGDSEDGAILVFLPGWDDINKTRQRLLENPFFADSAKFDIICLHSMVPAGEQKKVFNRPPPGCRKIVLATNIAESAVTIDDVVYVIDSGRMKEKSYDPYNNVSTLQSSWVSKANAKQRQGRAGRCQPGICYHLYSRLRAASMPDFKVPEIKRMPVEELCLQVKILDPNCKTNDFLQKLLDPPVDQSIANALSILQDIGALTPQEELTELGEKFGHLPVHPLISKMLFFAVLVNCLDPALTLACAADYKEPFTMPMSPVERQKAAAAKLELASLCGGDSDHLAVVAAFECWKNAKGRGLSAEFCSQYFVSPSAMKMLDQMRSQLESELKRHGIIPNDISSCSQNSRDPGILRAVLAVGLYPMVGRLCPAFGNNRRTIVETASGAKVRVHSLSNNFNLSSKKYDESLLVFDEITRGDGGMHIRNCTVARDLPLLLISTEIAVAPTGSSDSDDSNEEEEDDEEVAANTNEEVAANTNEEGMDIHKEESRRGAKMMSSPENSVKLVVDRWLPFRTTALEVAQMYILRERLMASILFKVTHPREHLPPHLGASMHAIAGILSYDGHAGLSCPPESMVPKHSRTEMYDTGGWEEKPNSFLNSLFWSLSLKENKHPSHTNRNQQHNYNMAPTEAASIPRQQNYKQRNPKATNNTDSGKKKEKMFVNPTNRINQPEAASTGKPSKHKSANSSGSSNKKENMPSDQAYGNKQHNTVPREAAAPMAKNQSSKKTKTRSGNNSDSGKKKEQYIPKRQREDKAEQK.

The R3H domain maps to 15–82 (PTSVEATRIW…QRRLSIFKSR (68 aa)). The 170-residue stretch at 197-366 (TSAVESNQVI…FGGCPVVRVP (170 aa)) folds into the Helicase ATP-binding domain. ATP is bound at residue 210–217 (GETGCGKT). The short motif at 313 to 316 (DEIH) is the DEIH box element. The Helicase C-terminal domain occupies 537-711 (LIQQLMRKIC…ELCLQVKILD (175 aa)). 2 disordered regions span residues 987–1039 (PTGS…MMSS) and 1175–1299 (IPRQ…AEQK). The segment covering 992 to 1006 (DSDDSNEEEEDDEEV) has biased composition (acidic residues). The span at 1007–1020 (AANTNEEVAANTNE) shows a compositional bias: low complexity. Basic and acidic residues predominate over residues 1023–1032 (MDIHKEESRR). Polar residues-rich tracts occupy residues 1176-1193 (PRQQ…NNTD), 1204-1214 (NPTNRINQPEA), and 1239-1251 (PSDQ…QHNT). The short motif at 1182–1200 (KQRNPKATNNTDSGKKKEK) is the Bipartite nuclear localization signal element. The Bipartite nuclear localization signal motif lies at 1267 to 1283 (KKTKTRSGNNSDSGKKK). The span at 1279–1299 (SGKKKEQYIPKRQREDKAEQK) shows a compositional bias: basic and acidic residues.

The protein belongs to the DExH box helicase family. In terms of tissue distribution, specifically expressed in the tapetum and vascular tissues.

Its subcellular location is the nucleus. It carries out the reaction ATP + H2O = ADP + phosphate + H(+). May function as an ATP-dependent RNA/DNA helicase. This Arabidopsis thaliana (Mouse-ear cress) protein is DExH-box ATP-dependent RNA helicase DExH6.